The primary structure comprises 422 residues: Metallocarboxypeptidase A (422 aa).

Residues 1 to 17 (MRSVLSLALLAANVVTA) form the signal peptide. Residues 18–112 (AVVSPFDYSG…FEAYSAGYAP (95 aa)) constitute a propeptide, activation peptide. The region spanning 119-419 (SYHSYQDHLS…AGTVAMLKAV (301 aa)) is the Peptidase M14 domain. The Zn(2+) site is built by H179 and E182. Residues 179–182 (HARE), R237, and 254–255 (NR) each bind substrate. A disulfide bond links C248 and C271. Residue H309 coordinates Zn(2+). Position 310–311 (310–311 (SY)) interacts with substrate. Residue E385 is the Proton donor/acceptor of the active site.

Belongs to the peptidase M14 family. The cofactor is Zn(2+).

It localises to the secreted. In terms of biological role, extracellular metalloprotease that contributes to pathogenicity. The protein is Metallocarboxypeptidase A (MCPA) of Trichophyton rubrum (Athlete's foot fungus).